A 72-amino-acid polypeptide reads, in one-letter code: Large ribosomal subunit protein bL31 (72 aa).

Residues cysteine 16, cysteine 18, cysteine 38, and cysteine 41 each contribute to the Zn(2+) site.

Belongs to the bacterial ribosomal protein bL31 family. Type A subfamily. Part of the 50S ribosomal subunit. It depends on Zn(2+) as a cofactor.

Functionally, binds the 23S rRNA. This chain is Large ribosomal subunit protein bL31, found in Vibrio campbellii (strain ATCC BAA-1116).